A 116-amino-acid chain; its full sequence is Iron-sulfur cluster insertion protein ErpA (116 aa).

Cys44, Cys108, and Cys110 together coordinate iron-sulfur cluster.

The protein belongs to the HesB/IscA family. In terms of assembly, homodimer. Iron-sulfur cluster is required as a cofactor.

Functionally, required for insertion of 4Fe-4S clusters for at least IspG. The chain is Iron-sulfur cluster insertion protein ErpA from Shewanella putrefaciens (strain CN-32 / ATCC BAA-453).